The primary structure comprises 494 residues: Probable cobyric acid synthase (494 aa).

A GATase cobBQ-type domain is found at 249-447; the sequence is SVRIAVIRLP…LHGIFFNRRF (199 aa). The Nucleophile role is filled by C331. Residue H439 is part of the active site.

The protein belongs to the CobB/CobQ family. CobQ subfamily.

Its pathway is cofactor biosynthesis; adenosylcobalamin biosynthesis. Its function is as follows. Catalyzes amidations at positions B, D, E, and G on adenosylcobyrinic A,C-diamide. NH(2) groups are provided by glutamine, and one molecule of ATP is hydrogenolyzed for each amidation. This is Probable cobyric acid synthase from Methanopyrus kandleri (strain AV19 / DSM 6324 / JCM 9639 / NBRC 100938).